Here is a 350-residue protein sequence, read N- to C-terminus: tRNA N6-adenosine threonylcarbamoyltransferase (350 aa).

Residues His-115 and His-119 each contribute to the Fe cation site. Residues 137–141 (IISGG), Asp-170, Gly-183, and Asn-281 each bind substrate. Fe cation is bound at residue Asp-309.

This sequence belongs to the KAE1 / TsaD family. Requires Fe(2+) as cofactor.

The protein resides in the cytoplasm. It catalyses the reaction L-threonylcarbamoyladenylate + adenosine(37) in tRNA = N(6)-L-threonylcarbamoyladenosine(37) in tRNA + AMP + H(+). Its function is as follows. Required for the formation of a threonylcarbamoyl group on adenosine at position 37 (t(6)A37) in tRNAs that read codons beginning with adenine. Is involved in the transfer of the threonylcarbamoyl moiety of threonylcarbamoyl-AMP (TC-AMP) to the N6 group of A37, together with TsaE and TsaB. TsaD likely plays a direct catalytic role in this reaction. The protein is tRNA N6-adenosine threonylcarbamoyltransferase of Ehrlichia canis (strain Jake).